The sequence spans 132 residues: HLA class I histocompatibility antigen protein P5 (132 aa).

Expressed in lymphoid tissues; Detected in spleen as well as in B-cell lines, NK cell lines and activated lymphocytes.

This chain is HLA class I histocompatibility antigen protein P5 (HCP5), found in Homo sapiens (Human).